The primary structure comprises 71 residues: Protein PSY2 (71 aa).

The N-terminal stretch at 1–20 is a signal peptide; it reads MSFGTRLLLFLILTLPLVTS. A propeptide spanning residues 21 to 46 is cleaved from the precursor; sequence SSPNTLHVSGIVKTGTTSRFLMMTIE. Sulfotyrosine is present on tyrosine 48. The tract at residues 50 to 71 is disordered; sequence DPSANTRHDPSVPTNAKADTTP. A compositionally biased stretch (polar residues) spans 61-71; it reads VPTNAKADTTP. Proline 62 is subject to 4-hydroxyproline. O-linked (Ara...) hydroxyproline glycosylation occurs at proline 62. The propeptide occupies 65–71; sequence AKADTTP.

It belongs to the sulfated-peptide plant hormone family. Post-translationally, the sulfation and the glycosylation are required for full activity.

It localises to the secreted. Its function is as follows. Promotes cellular proliferation and expansion. The polypeptide is Protein PSY2 (PSY2) (Arabidopsis thaliana (Mouse-ear cress)).